A 755-amino-acid polypeptide reads, in one-letter code: Xaa-Pro dipeptidyl-peptidase (755 aa).

Active-site charge relay system residues include serine 348, aspartate 468, and histidine 498.

It belongs to the peptidase S15 family. In terms of assembly, homodimer.

Its subcellular location is the cytoplasm. The enzyme catalyses Hydrolyzes Xaa-Pro-|- bonds to release unblocked, N-terminal dipeptides from substrates including Ala-Pro-|-p-nitroanilide and (sequentially) Tyr-Pro-|-Phe-Pro-|-Gly-Pro-|-Ile.. Its function is as follows. Removes N-terminal dipeptides sequentially from polypeptides having unsubstituted N-termini provided that the penultimate residue is proline. The protein is Xaa-Pro dipeptidyl-peptidase of Streptococcus thermophilus (strain ATCC BAA-250 / LMG 18311).